The primary structure comprises 123 residues: Small ribosomal subunit protein uS12 (123 aa).

At Asp89 the chain carries 3-methylthioaspartic acid.

The protein belongs to the universal ribosomal protein uS12 family. In terms of assembly, part of the 30S ribosomal subunit. Contacts proteins S8 and S17. May interact with IF1 in the 30S initiation complex.

Functionally, with S4 and S5 plays an important role in translational accuracy. In terms of biological role, interacts with and stabilizes bases of the 16S rRNA that are involved in tRNA selection in the A site and with the mRNA backbone. Located at the interface of the 30S and 50S subunits, it traverses the body of the 30S subunit contacting proteins on the other side and probably holding the rRNA structure together. The combined cluster of proteins S8, S12 and S17 appears to hold together the shoulder and platform of the 30S subunit. The chain is Small ribosomal subunit protein uS12 from Brucella anthropi (strain ATCC 49188 / DSM 6882 / CCUG 24695 / JCM 21032 / LMG 3331 / NBRC 15819 / NCTC 12168 / Alc 37) (Ochrobactrum anthropi).